The primary structure comprises 292 residues: HTH-type transcriptional regulator BlaA (292 aa).

In terms of domain architecture, HTH lysR-type spans 5–62 (LPLNALRAFEASARHLNFTKAALELYVTQGAVSQQVRMLEERLGVILFKRLPRGLEMT). A DNA-binding region (H-T-H motif) is located at residues 22–41 (FTKAALELYVTQGAVSQQVR).

Belongs to the LysR transcriptional regulatory family.

In terms of biological role, positive regulator of the expression of the gene (blaB) for beta-lactamase. The protein is HTH-type transcriptional regulator BlaA (blaA) of Proteus vulgaris.